The following is a 348-amino-acid chain: MSDDKSKALAAALAQIEKSFGKGAIMKMDGSQQEENLEVISTGSLGLDLALGVGGLPRGRIVEIFGPESSGKTTLCLEAVAQCQKNGGVCAFVDAEHAFDPVYARKLGVKVEELYLSQPDTGEQALEICDTLVRSGGIDMVVVDSVAALVPKAEIEGDMGDSHVGLQARLMSQALRKLTGHIKKTNTLVVFINQIRMKIGVMFGSPETTTGGNALKFYSSVRLDIRRTGSIKKGEEVLGNETRVKVIKNKVAPPFRQAEFDILYGEGISWEGELIDIGVKNDIINKSGAWYSYNGAKIGQGKDNVRVWLKENPEISDEIDAKIRALNGVEMHITEGTQDETDGERPEE.

66–73 (GPESSGKT) is a binding site for ATP.

This sequence belongs to the RecA family.

Its subcellular location is the cytoplasm. Its function is as follows. Can catalyze the hydrolysis of ATP in the presence of single-stranded DNA, the ATP-dependent uptake of single-stranded DNA by duplex DNA, and the ATP-dependent hybridization of homologous single-stranded DNAs. It interacts with LexA causing its activation and leading to its autocatalytic cleavage. The protein is Protein RecA of Neisseria gonorrhoeae (strain NCCP11945).